We begin with the raw amino-acid sequence, 354 residues long: Falstatin (354 aa).

Residues 1–21 form the signal peptide; that stretch reads MKSITFFVFNICSILALLSHC. Positions 226–236 match the BC loop; binds and inhibits the active site cavity of cysteine proteases motif; sequence LEGNAGTGYLW. The disordered stretch occupies residues 274-317; the sequence is KYKIDEHDSSKNVNREIESPEQKESDSKPKKPQMQLLGGPDRMR. Residues 275–302 show a composition bias toward basic and acidic residues; that stretch reads YKIDEHDSSKNVNREIESPEQKESDSKP.

Belongs to the protease inhibitor I71 family. In terms of assembly, oligomer; probably composed of 10 monomers. During the liver stage, proteolytically cleaved.

The protein localises to the secreted. It is found in the cytoplasmic vesicle. The protein resides in the secretory vesicle. It localises to the microneme. Its subcellular location is the host cytoplasm. The protein localises to the parasitophorous vacuole lumen. Cysteine protease inhibitor. Required for the invasion of host erythrocytes by merozoites. In the mosquito vector, essential for the gliding motility of hemocoel sporozoites and, therefore, for salivary gland invasion and the subsequent transmission from the mosquito to the mammalian host. Required for the invasion of host hepatocytes. During the liver stage, may prevent host hepatocyte cell death likely by inhibiting host cysteine proteases. The polypeptide is Falstatin (Plasmodium berghei (strain Anka)).